A 229-amino-acid chain; its full sequence is Orotidine 5'-phosphate decarboxylase (229 aa).

Residues Asp-11, Lys-33, 61 to 70 (DMKLFDISAT), Thr-116, Arg-179, Gln-188, Gly-208, and Arg-209 each bind substrate. The active-site Proton donor is Lys-63.

It belongs to the OMP decarboxylase family. Type 1 subfamily. As to quaternary structure, homodimer.

It carries out the reaction orotidine 5'-phosphate + H(+) = UMP + CO2. The protein operates within pyrimidine metabolism; UMP biosynthesis via de novo pathway; UMP from orotate: step 2/2. Its function is as follows. Catalyzes the decarboxylation of orotidine 5'-monophosphate (OMP) to uridine 5'-monophosphate (UMP). This chain is Orotidine 5'-phosphate decarboxylase, found in Jannaschia sp. (strain CCS1).